Here is a 492-residue protein sequence, read N- to C-terminus: MTLWINGDWVTGQGALRVKRNPVSGEVLWQGNDADAAQVGQACRAARAAFPRWARLSFGDRQVRVERFAGLLESNKAELTAIIARETGKPRWEAATEVTAMINKIAISIKAYHVRTGEQRSEMPDGAASLRHRPHGVLAVFGPYNFPGHLPNGHIVPALLAGNTIIFKPSELTPWSGDAVMRLWQQAGLPPGVLNLVQGGRETGQALSALEDLDGLLFTGSANTGYQLHRQLSGQPEKILALEMGGNNPLIIDEVADIDAAVHLTIQSAFVTAGQRCTCARRLFLKSGTQGDAFLARLVAVSQRLTPGTWDDEPQPFIGGLISEQAAQQVVTAWQELEAMGGRTLLAPRLLQAGTSLLTPGIIEMTGVTGLPDEEVFGPLLRVWRYDNFDEAIRMANNTRFGLSCGLVSPEREKFDQLLLEARAGIVNWNKPLTGAASTAPFGGIGASGNHRPSAWYAADYCAWPMASLESDSLTLPATLNPGLDFSDEVVR.

An NAD(+)-binding site is contributed by 220–225 (GSANTG). Residues Glu243 and Cys277 contribute to the active site.

The protein belongs to the aldehyde dehydrogenase family. AstD subfamily.

It catalyses the reaction N-succinyl-L-glutamate 5-semialdehyde + NAD(+) + H2O = N-succinyl-L-glutamate + NADH + 2 H(+). It participates in amino-acid degradation; L-arginine degradation via AST pathway; L-glutamate and succinate from L-arginine: step 4/5. Functionally, catalyzes the NAD-dependent reduction of succinylglutamate semialdehyde into succinylglutamate. The polypeptide is N-succinylglutamate 5-semialdehyde dehydrogenase (Escherichia coli (strain UTI89 / UPEC)).